A 258-amino-acid polypeptide reads, in one-letter code: Acetylglutamate kinase (258 aa).

Substrate contacts are provided by residues glycine 44–glycine 45, arginine 66, and asparagine 158. ATP contacts are provided by residues aspartate 181 to leucine 186 and isoleucine 209 to threonine 211.

Belongs to the acetylglutamate kinase family. ArgB subfamily. In terms of assembly, homodimer.

The protein resides in the cytoplasm. The catalysed reaction is N-acetyl-L-glutamate + ATP = N-acetyl-L-glutamyl 5-phosphate + ADP. It functions in the pathway amino-acid biosynthesis; L-arginine biosynthesis; N(2)-acetyl-L-ornithine from L-glutamate: step 2/4. Catalyzes the ATP-dependent phosphorylation of N-acetyl-L-glutamate. This is Acetylglutamate kinase from Shigella flexneri serotype 5b (strain 8401).